Here is a 127-residue protein sequence, read N- to C-terminus: Large ribosomal subunit protein bL20 (127 aa).

It belongs to the bacterial ribosomal protein bL20 family.

In terms of biological role, binds directly to 23S ribosomal RNA and is necessary for the in vitro assembly process of the 50S ribosomal subunit. It is not involved in the protein synthesizing functions of that subunit. In Mycoplasma pneumoniae (strain ATCC 29342 / M129 / Subtype 1) (Mycoplasmoides pneumoniae), this protein is Large ribosomal subunit protein bL20 (rplT).